Consider the following 308-residue polypeptide: MTTDSITFNHILGQGRVNQLGGVFINGRPLPIHVRHAIISMAKKGIKPCHISRQLKVSHGAVSKILNRYAETGSISPGQIGGSPRARLTVQAVEKEILIACDENPQMSAAELRDWLIHKDICTKGNAPTVPAIKRLIGNKGVGVPKKMERKRLSYSIDSILGISIDECSKSSSDDEEGSSPSNDASSRRNRTSFTAEQLDVLENAFRADTYPHANARESISKETGLSEEKIMTWFSNRRARCRKNMPMYQQYNVQGFGSSPPSYPTLLPSPMMFLPSYSTSPQLNPLFFQHILQSSPPSSQSSPPSSS.

A DNA-binding region (paired) is located at residues 13–140 (GQGRVNQLGG…PAIKRLIGNK (128 aa)). Residues 16 to 72 (RVNQLGGVFINGRPLPIHVRHAIISMAKKGIKPCHISRQLKVSHGAVSKILNRYAET) are PAI subdomain. The RED subdomain stretch occupies residues 92 to 140 (AVEKEILIACDENPQMSAAELRDWLIHKDICTKGNAPTVPAIKRLIGNK). Residues 168–191 (CSKSSSDDEEGSSPSNDASSRRNR) form a disordered region. Positions 187-246 (SRRNRTSFTAEQLDVLENAFRADTYPHANARESISKETGLSEEKIMTWFSNRRARCRKNM) form a DNA-binding region, homeobox.

It belongs to the paired homeobox family.

Its subcellular location is the nucleus. Transcriptional activator. Regulates the lateral/ventral epidermal cell fate decision. The chain is Paired box protein 3 homolog from Caenorhabditis elegans.